The sequence spans 131 residues: Dihydroneopterin aldolase 2 (131 aa).

Substrate-binding positions include E29, Y61, and 80–81 (LE). The Proton donor/acceptor role is filled by K107.

Belongs to the DHNA family. As to quaternary structure, homooctamer. Forms a hollow cylinder assembled from two ring-shaped tetramers. In terms of tissue distribution, expressed in roots, leaves, stems and siliques.

It catalyses the reaction 7,8-dihydroneopterin = 6-hydroxymethyl-7,8-dihydropterin + glycolaldehyde. The protein operates within cofactor biosynthesis; tetrahydrofolate biosynthesis; 2-amino-4-hydroxy-6-hydroxymethyl-7,8-dihydropteridine diphosphate from 7,8-dihydroneopterin triphosphate: step 3/4. Functionally, catalyzes the conversion of 7,8-dihydroneopterin into 6-hydroxymethyl-7,8-dihydropterin, a biosynthetic precursor of the vitamin tetrahydrofolate. Can use L-threo-dihydroneopterin and D-erythro-dihydroneopterin as substrates for the formation of 6-hydroxymethyldihydropterin, but it can also catalyze the epimerization of carbon 2' of dihydroneopterin and dihydromonapterin. The chain is Dihydroneopterin aldolase 2 from Arabidopsis thaliana (Mouse-ear cress).